A 523-amino-acid polypeptide reads, in one-letter code: Signal peptide peptidase-like 3 (523 aa).

The signal sequence occupies residues 1–35; sequence MAFPAPSSSSPRRRGRGLAYLLVSVLLLASRVPGA. Residues 36–207 are Lumenal-facing; sequence AGADSEFEDG…EKPSFDGAIP (172 aa). One can recognise a PA domain in the interval 110–182; sequence SAPLASSIAV…SQSAGRKILS (73 aa). Asparagine 159 carries N-linked (GlcNAc...) asparagine glycosylation. Residues 208–228 form a helical membrane-spanning segment; sequence FLWLMAVGSVACASVWSFVVV. At 229–254 the chain is on the cytoplasmic side; it reads GDEDKNAPTLGGEEAADSEIVELQTK. Residues 255–272 traverse the membrane as a helical segment; the sequence is TALVFIVTASLVLLFLFF. Residues 273–275 are Lumenal-facing; the sequence is FKS. The helical transmembrane segment at 276 to 298 threads the bilayer; the sequence is TWSAWLLVVLFCLSGLQGLHYVA. The Cytoplasmic segment spans residues 299 to 321; the sequence is STLIVRTCDRCREAKVALPVLGN. The chain crosses the membrane as a helical span at residues 322–342; sequence VTVVTLVILPLALIFVVVWAV. At 343 to 347 the chain is on the lumenal side; the sequence is HQNSP. A helical transmembrane segment spans residues 348 to 368; sequence FAWVGQDLMGICMMILVLQVV. Topologically, residues 369-377 are cytoplasmic; sequence HLPNIKVAT. A helical membrane pass occupies residues 378-398; sequence ALLVSAFMYDIFWVFISPFIF. Residue aspartate 387 is part of the active site. Over 399 to 430 the chain is Lumenal; the sequence is KKSVMITVARGSDEGPSLPMVLKMPKEFDTWN. The chain crosses the membrane as a helical span at residues 431–451; that stretch reads GYDMIGFGDILFPGLLVAFSF. Aspartate 439 is an active-site residue. At 452 to 465 the chain is on the cytoplasmic side; it reads RYDRANGKDLTDGY. The helical transmembrane segment at 466-486 threads the bilayer; that stretch reads FLCLMIGYAFGLSCTYVGLYL. Residues 487–489 lie on the Lumenal side of the membrane; that stretch reads MKS. A helical transmembrane segment spans residues 490–510; that stretch reads GQPALLYLVPSTLGTIVTLGA. A PAL motif is present at residues 492 to 494; it reads PAL. Residues 511-523 lie on the Cytoplasmic side of the membrane; that stretch reads KRGELSQLWNAKV.

Belongs to the peptidase A22B family. Glycosylated.

The protein localises to the endosome membrane. Its function is as follows. Intramembrane-cleaving aspartic protease (I-CLiP) that cleaves type II membrane signal peptides in the hydrophobic plane of the membrane. This Oryza sativa subsp. japonica (Rice) protein is Signal peptide peptidase-like 3 (SPPL3).